Reading from the N-terminus, the 556-residue chain is Formate--tetrahydrofolate ligase (556 aa).

Position 65 to 72 (65 to 72 (TPAGEGKS)) interacts with ATP.

It belongs to the formate--tetrahydrofolate ligase family.

It carries out the reaction (6S)-5,6,7,8-tetrahydrofolate + formate + ATP = (6R)-10-formyltetrahydrofolate + ADP + phosphate. It functions in the pathway one-carbon metabolism; tetrahydrofolate interconversion. In Clostridium perfringens (strain SM101 / Type A), this protein is Formate--tetrahydrofolate ligase.